Here is a 155-residue protein sequence, read N- to C-terminus: RING finger protein 122 (155 aa).

Residues 40 to 60 (VIFGTGIFVFMLSLIFCCYFI) form a helical membrane-spanning segment. The RING-type; atypical zinc-finger motif lies at 93–134 (CAVCLEDFKGKDELGVLPCQHAFHRKCLVKWLEVRCVCPMCN).

Its subcellular location is the golgi apparatus. The protein localises to the endoplasmic reticulum. It localises to the membrane. In terms of biological role, may induce necrosis and apoptosis. May play a role in cell viability. This is RING finger protein 122 (Rnf122) from Mus musculus (Mouse).